The chain runs to 575 residues: Homocysteine/cysteine synthase (575 aa).

Lysine 376 is subject to N6-(pyridoxal phosphate)lysine.

Belongs to the trans-sulfuration enzymes family. MET7 subfamily. It depends on pyridoxal 5'-phosphate as a cofactor.

Its subcellular location is the cytoplasm. It carries out the reaction O-acetyl-L-homoserine + methanethiol = L-methionine + acetate + H(+). It catalyses the reaction O-acetyl-L-homoserine + hydrogen sulfide = L-homocysteine + acetate. The enzyme catalyses O-acetyl-L-serine + hydrogen sulfide = L-cysteine + acetate. The protein operates within amino-acid biosynthesis; L-methionine biosynthesis via de novo pathway; L-homocysteine from O-acetyl-L-homoserine. Its function is as follows. Plays a role in inorganic sulfur assimilation during sulfur-limited conditions; catalyzes the conversion of O-acetyl-L-homoserine (OAH) into homocysteine in the methionine biosynthesis pathway. Also catalyzes the conversion of O-acetylserine (OAS) into cysteine, the last step in the cysteine biosynthesis pathway. However, it seems that in S.cerevisiae cysteine biosynthesis occurs exclusively through the cystathionine pathway and not via direct incorporation of sulfur into OAS. It therefore has no metabolic role in cysteine biosynthesis and may only have a regulatory role controlling OAS levels. This chain is Homocysteine/cysteine synthase, found in Saccharomyces cerevisiae (strain ATCC 204508 / S288c) (Baker's yeast).